We begin with the raw amino-acid sequence, 403 residues long: CCA-adding enzyme (403 aa).

ATP-binding residues include Gly32 and Arg35. Residues Gly32 and Arg35 each coordinate CTP. Residues Asp45 and Asp47 each contribute to the Mg(2+) site. Arg116, Asp159, Arg162, Arg165, and Arg168 together coordinate ATP. The CTP site is built by Arg116, Asp159, Arg162, Arg165, and Arg168.

It belongs to the tRNA nucleotidyltransferase/poly(A) polymerase family. Bacterial CCA-adding enzyme type 3 subfamily. Homodimer. Mg(2+) is required as a cofactor.

It carries out the reaction a tRNA precursor + 2 CTP + ATP = a tRNA with a 3' CCA end + 3 diphosphate. It catalyses the reaction a tRNA with a 3' CCA end + 2 CTP + ATP = a tRNA with a 3' CCACCA end + 3 diphosphate. Catalyzes the addition and repair of the essential 3'-terminal CCA sequence in tRNAs without using a nucleic acid template. Adds these three nucleotides in the order of C, C, and A to the tRNA nucleotide-73, using CTP and ATP as substrates and producing inorganic pyrophosphate. tRNA 3'-terminal CCA addition is required both for tRNA processing and repair. Also involved in tRNA surveillance by mediating tandem CCA addition to generate a CCACCA at the 3' terminus of unstable tRNAs. While stable tRNAs receive only 3'-terminal CCA, unstable tRNAs are marked with CCACCA and rapidly degraded. This chain is CCA-adding enzyme, found in Limosilactobacillus reuteri (strain DSM 20016) (Lactobacillus reuteri).